The primary structure comprises 287 residues: Universal stress protein Slr1230 (287 aa).

Belongs to the universal stress protein A family.

This chain is Universal stress protein Slr1230, found in Synechocystis sp. (strain ATCC 27184 / PCC 6803 / Kazusa).